Consider the following 308-residue polypeptide: Cilia- and flagella-associated protein 73 (308 aa).

Coiled-coil stretches lie at residues 103–134 (RIQK…LEKN) and 164–227 (LSAT…QEAK).

Belongs to the CFAP73 family. In terms of assembly, interacts with FAP100; form the modifier of inner arm (MIA) complex.

It is found in the cytoplasm. It localises to the cytoskeleton. The protein localises to the flagellum axoneme. Its function is as follows. As part of MIA, a complex associated with the outer doublet microtubules of the axoneme, may play a role in ciliary/flagellar motility by regulating the assembly and the activity of inner dynein arm. In Chlamydomonas reinhardtii (Chlamydomonas smithii), this protein is Cilia- and flagella-associated protein 73.